Consider the following 238-residue polypeptide: Sugar fermentation stimulation protein homolog (238 aa).

It belongs to the SfsA family.

The sequence is that of Sugar fermentation stimulation protein homolog from Vibrio vulnificus (strain CMCP6).